The chain runs to 119 residues: MSEPLHALAKQLEQAIRASEPFQQLKRAYEDVRRDETAYRMFANVRDIQLQLHEKQMRGAAILPDEIEQAQKAMALAQQNEKLARLMALEQQMSMTIAEVQQIAMKPLEELHRSFMEGR.

It belongs to the UPF0342 family.

In Geobacillus kaustophilus (strain HTA426), this protein is UPF0342 protein GK0640.